The sequence spans 296 residues: MAATAEVGVTATLGAAARAVATRQGLLNDPYAEPLLGAVGIDYLTRAIADHTFAADESPVGDDPAVTSLLDALAAHTRFVDEFLAEAGRAGIRQVVILASGLDTRPYRLWWPRGTTVYEIDRPRVLDFKAGVLRGLDARLATNRCAVGIDLRDDWPAALRRVGFDAAQPTAWVAEQLLVGYLKPAEQNRLLRRLTAASAAGSRLAADHLPTWDPLQLEAERAFVEGWRRRGLDIDLASLTHPGEYHYVPEYLATHGWEPAARSIADLLGALGLGPRRRAGSGGAQFIPEYVTATRV.

S-adenosyl-L-methionine contacts are provided by residues Asp-121 and 150–151 (DL).

Belongs to the UPF0677 family.

Exhibits S-adenosyl-L-methionine-dependent methyltransferase activity. The sequence is that of Putative S-adenosyl-L-methionine-dependent methyltransferase MAV_4764 from Mycobacterium avium (strain 104).